The sequence spans 123 residues: Large ribosomal subunit protein uL18 (123 aa).

It belongs to the universal ribosomal protein uL18 family. As to quaternary structure, part of the 50S ribosomal subunit; part of the 5S rRNA/L5/L18/L25 subcomplex. Contacts the 5S and 23S rRNAs.

Its function is as follows. This is one of the proteins that bind and probably mediate the attachment of the 5S RNA into the large ribosomal subunit, where it forms part of the central protuberance. In Chlamydia abortus (strain DSM 27085 / S26/3) (Chlamydophila abortus), this protein is Large ribosomal subunit protein uL18.